Reading from the N-terminus, the 508-residue chain is Arabinose import ATP-binding protein AraG (508 aa).

ABC transporter domains lie at 5 to 240 and 250 to 496; these read LEFQ…MVGR and ARTL…LPDA. 37-44 contributes to the ATP binding site; that stretch reads GENGAGKS.

The protein belongs to the ABC transporter superfamily. Arabinose importer (TC 3.A.1.2.2) family. As to quaternary structure, the complex is composed of two ATP-binding proteins (AraG), two transmembrane proteins (AraH) and a solute-binding protein (AraF).

It localises to the cell inner membrane. It carries out the reaction L-arabinose(out) + ATP + H2O = L-arabinose(in) + ADP + phosphate + H(+). In terms of biological role, part of the ABC transporter complex AraFGH involved in arabinose import. Responsible for energy coupling to the transport system. This Rhizobium meliloti (strain 1021) (Ensifer meliloti) protein is Arabinose import ATP-binding protein AraG.